The sequence spans 430 residues: MSVLVVGISHKSAPVALLEQLALDGPGLHKLIDDVAASEHVTEATVIATCNRLEIYAEVDRFHGSVEEVSRLVVDRAGERTEAMLPHLYVHYDDGAVSHLFQVVAGLDSMAVGEGQILGQTRAALNAGQEIGTVGPALNVLFQQALRVGKRARAETGIDRAAPSLVSAALDRSRATVGELSGKRVLVVGAGSMAGLATSTVAARGTASVTVVNRTSGNADRLAEEYGARSATLAELAAELAVADVVISCTGATGTLITRDMVAAATVDGRELSILDLALPHDVDPTVADLPGVSLVGLTDLADELRDSDAGQEVEAVRQIVTQEVAAFLSARRQASVTPTVVALRSMATSVVEAEMERLTSRVPGLDDDIRAEVLHTVRRVADKLLHQPTVRVRELANETGAVSYAAALAELFALDQEAVDAVTRPEGLT.

Substrate-binding positions include 49–52 (TCNR), Ser109, 114–116 (EGQ), and Gln120. Cys50 (nucleophile) is an active-site residue. 189 to 194 (GAGSMA) serves as a coordination point for NADP(+).

The protein belongs to the glutamyl-tRNA reductase family. Homodimer.

The catalysed reaction is (S)-4-amino-5-oxopentanoate + tRNA(Glu) + NADP(+) = L-glutamyl-tRNA(Glu) + NADPH + H(+). The protein operates within porphyrin-containing compound metabolism; protoporphyrin-IX biosynthesis; 5-aminolevulinate from L-glutamyl-tRNA(Glu): step 1/2. Catalyzes the NADPH-dependent reduction of glutamyl-tRNA(Glu) to glutamate 1-semialdehyde (GSA). The sequence is that of Glutamyl-tRNA reductase 1 from Nocardioides sp. (strain ATCC BAA-499 / JS614).